An 815-amino-acid polypeptide reads, in one-letter code: Glycogen phosphorylase (815 aa).

At Lys662 the chain carries N6-(pyridoxal phosphate)lysine.

The protein belongs to the glycogen phosphorylase family. Requires pyridoxal 5'-phosphate as cofactor.

It catalyses the reaction [(1-&gt;4)-alpha-D-glucosyl](n) + phosphate = [(1-&gt;4)-alpha-D-glucosyl](n-1) + alpha-D-glucose 1-phosphate. Phosphorylase is an important allosteric enzyme in carbohydrate metabolism. Enzymes from different sources differ in their regulatory mechanisms and in their natural substrates. However, all known phosphorylases share catalytic and structural properties. This Shigella flexneri protein is Glycogen phosphorylase (glgP).